A 179-amino-acid chain; its full sequence is Large ribosomal subunit protein uL5 (179 aa).

The protein belongs to the universal ribosomal protein uL5 family. Part of the 50S ribosomal subunit; part of the 5S rRNA/L5/L18/L25 subcomplex. Contacts the 5S rRNA and the P site tRNA. Forms a bridge to the 30S subunit in the 70S ribosome.

In terms of biological role, this is one of the proteins that bind and probably mediate the attachment of the 5S RNA into the large ribosomal subunit, where it forms part of the central protuberance. In the 70S ribosome it contacts protein S13 of the 30S subunit (bridge B1b), connecting the 2 subunits; this bridge is implicated in subunit movement. Contacts the P site tRNA; the 5S rRNA and some of its associated proteins might help stabilize positioning of ribosome-bound tRNAs. The polypeptide is Large ribosomal subunit protein uL5 (Tolumonas auensis (strain DSM 9187 / NBRC 110442 / TA 4)).